We begin with the raw amino-acid sequence, 448 residues long: Glutamyl-tRNA reductase (448 aa).

Residues 49–52, Ser-109, 114–116, and Gln-120 contribute to the substrate site; these read TCNR and ETQ. Cys-50 serves as the catalytic Nucleophile. An NADP(+)-binding site is contributed by 189 to 194; sequence GAGEMS.

This sequence belongs to the glutamyl-tRNA reductase family. As to quaternary structure, homodimer.

The catalysed reaction is (S)-4-amino-5-oxopentanoate + tRNA(Glu) + NADP(+) = L-glutamyl-tRNA(Glu) + NADPH + H(+). The protein operates within porphyrin-containing compound metabolism; protoporphyrin-IX biosynthesis; 5-aminolevulinate from L-glutamyl-tRNA(Glu): step 1/2. Its function is as follows. Catalyzes the NADPH-dependent reduction of glutamyl-tRNA(Glu) to glutamate 1-semialdehyde (GSA). The sequence is that of Glutamyl-tRNA reductase from Staphylococcus aureus (strain bovine RF122 / ET3-1).